Reading from the N-terminus, the 91-residue chain is Long neurotoxin LNTX28 (91 aa).

A signal peptide spans 1–21 (MKTLLLTLVVMTIVCLDLGYT). 5 cysteine pairs are disulfide-bonded: C24/C41, C34/C62, C47/C51, C66/C77, and C78/C83.

Belongs to the three-finger toxin family. Long-chain subfamily. Type II alpha-neurotoxin sub-subfamily. In terms of tissue distribution, expressed by the venom gland.

The protein resides in the secreted. Its function is as follows. Binds with high affinity to muscular (alpha-1/CHRNA1) and neuronal (alpha-7/CHRNA7) nicotinic acetylcholine receptor (nAChR) and inhibits acetylcholine from binding to the receptor, thereby impairing neuromuscular and neuronal transmission. This is Long neurotoxin LNTX28 from Ophiophagus hannah (King cobra).